The primary structure comprises 457 residues: Aromatic amino acid transport protein AroP (457 aa).

Residues M1–I20 lie on the Cytoplasmic side of the membrane. A helical transmembrane segment spans residues Q21–I41. A topological domain (periplasmic) is located at residue Q42. A helical membrane pass occupies residues S43 to M63. The Cytoplasmic portion of the chain corresponds to R64–Y86. Residues W87–A107 traverse the membrane as a helical segment. The Periplasmic portion of the chain corresponds to M108–Y117. The chain crosses the membrane as a helical span at residues I118–I138. Residues N139 to W155 lie on the Cytoplasmic side of the membrane. The helical transmembrane segment at F156–F176 threads the bilayer. Residues S177–T201 are Periplasmic-facing. Residues G202–I222 traverse the membrane as a helical segment. The Cytoplasmic portion of the chain corresponds to T223–Q240. The helical transmembrane segment at V241–P261 threads the bilayer. The Periplasmic portion of the chain corresponds to W262–P271. A helical membrane pass occupies residues F272–V292. Topologically, residues L293–P333 are cytoplasmic. A helical transmembrane segment spans residues V334–A354. Residues P355 to A358 lie on the Periplasmic side of the membrane. A helical membrane pass occupies residues F359–L379. Residues A380–L400 lie on the Cytoplasmic side of the membrane. A helical membrane pass occupies residues F401–L421. The Periplasmic portion of the chain corresponds to M422–G425. The chain crosses the membrane as a helical span at residues M426–C446. The Cytoplasmic segment spans residues K447 to H457.

It belongs to the amino acid-polyamine-organocation (APC) superfamily. Amino acid transporter (AAT) (TC 2.A.3.1) family.

It is found in the cell inner membrane. It carries out the reaction L-phenylalanine(in) + H(+)(in) = L-phenylalanine(out) + H(+)(out). The catalysed reaction is L-tryptophan(in) + H(+)(in) = L-tryptophan(out) + H(+)(out). It catalyses the reaction L-tyrosine(in) + H(+)(in) = L-tyrosine(out) + H(+)(out). Its function is as follows. Permease that is involved in the active transport across the cytoplasmic membrane of all three aromatic amino acids, phenylalanine, tyrosine and tryptophan. The sequence is that of Aromatic amino acid transport protein AroP (aroP) from Salmonella typhi.